A 426-amino-acid polypeptide reads, in one-letter code: Serine--tRNA ligase (426 aa).

233–235 (TAE) contacts L-serine. 264-266 (RSE) is an ATP binding site. Residue Glu-287 coordinates L-serine. 351-354 (EISS) contacts ATP. Ser-387 is a binding site for L-serine.

The protein belongs to the class-II aminoacyl-tRNA synthetase family. Type-1 seryl-tRNA synthetase subfamily. As to quaternary structure, homodimer. The tRNA molecule binds across the dimer.

The protein resides in the cytoplasm. The enzyme catalyses tRNA(Ser) + L-serine + ATP = L-seryl-tRNA(Ser) + AMP + diphosphate + H(+). It catalyses the reaction tRNA(Sec) + L-serine + ATP = L-seryl-tRNA(Sec) + AMP + diphosphate + H(+). It functions in the pathway aminoacyl-tRNA biosynthesis; selenocysteinyl-tRNA(Sec) biosynthesis; L-seryl-tRNA(Sec) from L-serine and tRNA(Sec): step 1/1. Its function is as follows. Catalyzes the attachment of serine to tRNA(Ser). Is also able to aminoacylate tRNA(Sec) with serine, to form the misacylated tRNA L-seryl-tRNA(Sec), which will be further converted into selenocysteinyl-tRNA(Sec). The sequence is that of Serine--tRNA ligase from Stutzerimonas stutzeri (strain A1501) (Pseudomonas stutzeri).